Consider the following 260-residue polypeptide: Uroplakin-1b (260 aa).

The Cytoplasmic portion of the chain corresponds to 1–15 (MAKDDSTVRCFQGLL). A helical membrane pass occupies residues 16-36 (IFGHVIVGMCGIALTAECIFF). The Extracellular segment spans residues 37-59 (VSDQHSLYPLLEATNNDDIFGAA). The helical transmembrane segment at 60 to 80 (WIGMFVGICLFCLSVLAIVGI) threads the bilayer. At 81-86 (MKSNRK) the chain is on the cytoplasmic side. The helical transmembrane segment at 87–107 (ILLAYFIMMFIVYGFEVASCI) threads the bilayer. The Extracellular portion of the chain corresponds to 108–229 (TAATQRDFFT…ELISGPMDRH (122 aa)). The chain crosses the membrane as a helical span at residues 230 to 250 (AWGVAWFGFAILCWTFWVLLG). Residues 251-260 (TMFYWSRIEY) lie on the Cytoplasmic side of the membrane.

Belongs to the tetraspanin (TM4SF) family. As to quaternary structure, heterodimer with uroplakin-3A (UPK3A) or uroplakin-3B (UPK3B). Post-translationally, N-glycosylated with high-mannose oligosaccharides. As to expression, bladder epithelium.

It localises to the membrane. Component of the asymmetric unit membrane (AUM); a highly specialized biomembrane elaborated by terminally differentiated urothelial cells. May play an important role in normal bladder epithelial physiology, possibly in regulating membrane permeability of superficial umbrella cells or in stabilizing the apical membrane through AUM/cytoskeletal interactions. This chain is Uroplakin-1b (Upk1b), found in Mus musculus (Mouse).